Consider the following 201-residue polypeptide: 3-isopropylmalate dehydratase small subunit (201 aa).

It belongs to the LeuD family. LeuD type 1 subfamily. In terms of assembly, heterodimer of LeuC and LeuD.

It catalyses the reaction (2R,3S)-3-isopropylmalate = (2S)-2-isopropylmalate. Its pathway is amino-acid biosynthesis; L-leucine biosynthesis; L-leucine from 3-methyl-2-oxobutanoate: step 2/4. In terms of biological role, catalyzes the isomerization between 2-isopropylmalate and 3-isopropylmalate, via the formation of 2-isopropylmaleate. This chain is 3-isopropylmalate dehydratase small subunit, found in Parvibaculum lavamentivorans (strain DS-1 / DSM 13023 / NCIMB 13966).